A 149-amino-acid chain; its full sequence is Nucleoside diphosphate kinase (149 aa).

ATP-binding residues include Lys9, Phe57, Arg85, Thr91, Arg102, and Asn112. Catalysis depends on His115, which acts as the Pros-phosphohistidine intermediate.

The protein belongs to the NDK family. The cofactor is Mg(2+).

Its subcellular location is the cytoplasm. It carries out the reaction a 2'-deoxyribonucleoside 5'-diphosphate + ATP = a 2'-deoxyribonucleoside 5'-triphosphate + ADP. The enzyme catalyses a ribonucleoside 5'-diphosphate + ATP = a ribonucleoside 5'-triphosphate + ADP. In terms of biological role, major role in the synthesis of nucleoside triphosphates other than ATP. The ATP gamma phosphate is transferred to the NDP beta phosphate via a ping-pong mechanism, using a phosphorylated active-site intermediate. This Methanococcoides burtonii (strain DSM 6242 / NBRC 107633 / OCM 468 / ACE-M) protein is Nucleoside diphosphate kinase.